The chain runs to 262 residues: Glucosamine-6-phosphate deaminase (262 aa).

The Proton acceptor; for enolization step role is filled by Asp-63. Catalysis depends on Asn-129, which acts as the For ring-opening step. His-131 functions as the Proton acceptor; for ring-opening step in the catalytic mechanism. Glu-136 (for ring-opening step) is an active-site residue.

The protein belongs to the glucosamine/galactosamine-6-phosphate isomerase family. NagB subfamily.

The catalysed reaction is alpha-D-glucosamine 6-phosphate + H2O = beta-D-fructose 6-phosphate + NH4(+). Its pathway is amino-sugar metabolism; N-acetylneuraminate degradation; D-fructose 6-phosphate from N-acetylneuraminate: step 5/5. Catalyzes the reversible isomerization-deamination of glucosamine 6-phosphate (GlcN6P) to form fructose 6-phosphate (Fru6P) and ammonium ion. The chain is Glucosamine-6-phosphate deaminase from Bacillus cereus (strain G9842).